Here is a 372-residue protein sequence, read N- to C-terminus: 4-hydroxy-3-methylbut-2-en-1-yl diphosphate synthase (flavodoxin) (372 aa).

Positions 270, 273, 305, and 312 each coordinate [4Fe-4S] cluster.

The protein belongs to the IspG family. [4Fe-4S] cluster is required as a cofactor.

The catalysed reaction is (2E)-4-hydroxy-3-methylbut-2-enyl diphosphate + oxidized [flavodoxin] + H2O + 2 H(+) = 2-C-methyl-D-erythritol 2,4-cyclic diphosphate + reduced [flavodoxin]. It functions in the pathway isoprenoid biosynthesis; isopentenyl diphosphate biosynthesis via DXP pathway; isopentenyl diphosphate from 1-deoxy-D-xylulose 5-phosphate: step 5/6. In terms of biological role, converts 2C-methyl-D-erythritol 2,4-cyclodiphosphate (ME-2,4cPP) into 1-hydroxy-2-methyl-2-(E)-butenyl 4-diphosphate. The sequence is that of 4-hydroxy-3-methylbut-2-en-1-yl diphosphate synthase (flavodoxin) from Salmonella gallinarum (strain 287/91 / NCTC 13346).